The sequence spans 725 residues: Catalase B (725 aa).

An N-terminal signal peptide occupies residues Met-1–Ala-15. Positions Ala-16 to Arg-27 are excised as a propeptide. Asn-50 carries N-linked (GlcNAc...) asparagine glycosylation. Residue His-101 is part of the active site. The N-linked (GlcNAc...) asparagine glycan is linked to Asn-119. The active site involves Asn-174. Heme is bound at residue Tyr-388. N-linked (GlcNAc...) asparagine glycosylation is found at Asn-447, Asn-550, and Asn-645.

Belongs to the catalase family. Homotetramer. The cofactor is heme.

Its subcellular location is the secreted. The enzyme catalyses 2 H2O2 = O2 + 2 H2O. Its function is as follows. Occurs in almost all aerobically respiring organisms and serves to protect cells from the toxic effects of hydrogen peroxide through its degradation into water and oxygen. The sequence is that of Catalase B (catB) from Aspergillus oryzae (strain ATCC 42149 / RIB 40) (Yellow koji mold).